We begin with the raw amino-acid sequence, 151 residues long: Protein E6 (151 aa).

2 zinc fingers span residues 30–66 (CVYCKKTLEWADVYNFAICDLRIVYRNDSAYGACKKC) and 103–139 (CHRCQIPLGPEEKQRIVDEKRRFHEIAGYWKGLCTNC). Positions 149-151 (TQV) match the PDZ-binding domain motif.

It belongs to the papillomaviridae E6 protein family. Forms homodimers. Interacts with ubiquitin-protein ligase UBE3A/E6-AP and thus forms a complex with human TP53. Interacts with human NFX1 and MAGI3. Interacts with human IRF3; this interaction inhibits the establishment of antiviral state. Interacts with human TYK2; this interaction inhibits JAK-STAT activation by interferon alpha. Interacts with host DLG1; this interaction leads to the proteasomal degradation of DLG1.

It localises to the host cytoplasm. The protein resides in the host nucleus. Plays a major role in the induction and maintenance of cellular transformation. Acts mainly as an oncoprotein by stimulating the destruction of many host cell key regulatory proteins. E6 associates with host UBE3A/E6-AP ubiquitin-protein ligase, and inactivates tumor suppressors TP53 and TP73 by targeting them to the 26S proteasome for degradation. In turn, DNA damage and chromosomal instabilities increase and lead to cell proliferation and cancer development. The complex E6/E6AP targets several other substrates to degradation via the proteasome including host DLG1 or NFX1, a repressor of human telomerase reverse transcriptase (hTERT). The resulting increased expression of hTERT prevents the shortening of telomere length leading to cell immortalization. Other cellular targets including BAK1, Fas-associated death domain-containing protein (FADD) and procaspase 8, are degraded by E6/E6AP causing inhibition of apoptosis. E6 also inhibits immune response by interacting with host IRF3 and TYK2. These interactions prevent IRF3 transcriptional activities and inhibit TYK2-mediated JAK-STAT activation by interferon alpha resulting in inhibition of the interferon signaling pathway. The chain is Protein E6 from Homo sapiens (Human).